Here is a 710-residue protein sequence, read N- to C-terminus: Cyclin-dependent kinase G-2 (710 aa).

The interval 1 to 350 is disordered; it reads MAAGRHGGYR…ETPEPVKPPH (350 aa). Residues 8–30 are compositionally biased toward basic and acidic residues; sequence GYRDYEARERELDAEASRRSKEQ. Positions 31–40 are enriched in basic residues; the sequence is QHHHHPSGRH. Residues 41-64 show a composition bias toward basic and acidic residues; sequence QRGDSDPRCEADRRRDGGRSRGGR. The span at 124–133 shows a compositional bias: low complexity; the sequence is SVVAASASSP. Over residues 144–163 the composition is skewed to basic and acidic residues; the sequence is WDRDSPKPMHSDVAKGKKAV. Pro residues predominate over residues 170–182; it reads LPLPPPPPLPPQD. 2 stretches are compositionally biased toward basic and acidic residues: residues 183 to 195 and 209 to 218; these read HIPE…KSPM and LQEHAESRVM. Residues 299–308 show a composition bias toward acidic residues; sequence DENEDLEVDK. Residues 335 to 344 are compositionally biased toward basic and acidic residues; sequence YEVRRSETPE. The region spanning 365–656 is the Protein kinase domain; the sequence is FERLNKINEG…ADAALQHEWF (292 aa). ATP contacts are provided by residues 371–379 and K394; that span reads INEGTYGVV. T375 carries the post-translational modification Phosphothreonine. Y376 carries the post-translational modification Phosphotyrosine. D489 acts as the Proton acceptor in catalysis. S516 carries the phosphoserine modification. T522 bears the Phosphothreonine mark.

This sequence belongs to the protein kinase superfamily. CMGC Ser/Thr protein kinase family. CDC2/CDKX subfamily.

The catalysed reaction is L-seryl-[protein] + ATP = O-phospho-L-seryl-[protein] + ADP + H(+). The enzyme catalyses L-threonyl-[protein] + ATP = O-phospho-L-threonyl-[protein] + ADP + H(+). It carries out the reaction [DNA-directed RNA polymerase] + ATP = phospho-[DNA-directed RNA polymerase] + ADP + H(+). In Oryza sativa subsp. indica (Rice), this protein is Cyclin-dependent kinase G-2 (CDKG-2).